Here is an 832-residue protein sequence, read N- to C-terminus: Protein P (832 aa).

The terminal protein domain (TP) stretch occupies residues 1-177 (MPLSYQHFRK…FCGSPYSWEQ (177 aa)). Residues 178 to 335 (ELQHGAESFH…YCLSHLVSLL (158 aa)) form a spacer region. The interval 336 to 679 (DDWGPCTEHG…YSTLYPVARQ (344 aa)) is polymerase/reverse transcriptase domain (RT). The 244-residue stretch at 346–589 (EHHIRIPRTP…YSLHFMGYVI (244 aa)) folds into the Reverse transcriptase domain. Positions 418, 540, and 541 each coordinate Mg(2+).

The protein belongs to the hepadnaviridae P protein family.

It catalyses the reaction DNA(n) + a 2'-deoxyribonucleoside 5'-triphosphate = DNA(n+1) + diphosphate. The catalysed reaction is Endonucleolytic cleavage to 5'-phosphomonoester.. With respect to regulation, activated by host HSP70 and HSP40 in vitro to be able to bind the epsilon loop of the pgRNA. Because deletion of the RNase H region renders the protein partly chaperone-independent, the chaperones may be needed indirectly to relieve occlusion of the RNA-binding site by this domain. Inhibited by several reverse-transcriptase inhibitors: Lamivudine, Adefovir and Entecavir. Its function is as follows. Multifunctional enzyme that converts the viral RNA genome into dsDNA in viral cytoplasmic capsids. This enzyme displays a DNA polymerase activity that can copy either DNA or RNA templates, and a ribonuclease H (RNase H) activity that cleaves the RNA strand of RNA-DNA heteroduplexes in a partially processive 3'- to 5'-endonucleasic mode. Neo-synthesized pregenomic RNA (pgRNA) are encapsidated together with the P protein, and reverse-transcribed inside the nucleocapsid. Initiation of reverse-transcription occurs first by binding the epsilon loop on the pgRNA genome, and is initiated by protein priming, thereby the 5'-end of (-)DNA is covalently linked to P protein. Partial (+)DNA is synthesized from the (-)DNA template and generates the relaxed circular DNA (RC-DNA) genome. After budding and infection, the RC-DNA migrates in the nucleus, and is converted into a plasmid-like covalently closed circular DNA (cccDNA). The activity of P protein does not seem to be necessary for cccDNA generation, and is presumably released from (+)DNA by host nuclear DNA repair machinery. This is Protein P from Pan troglodytes (Chimpanzee).